Reading from the N-terminus, the 443-residue chain is Dihydroorotate dehydrogenase (quinone), mitochondrial (443 aa).

A mitochondrion-targeting transit peptide spans Met-1–Phe-21. The chain crosses the membrane as a helical span at residues Trp-38–Tyr-54. Residues Ala-122–Lys-126 and Ser-146 contribute to the FMN site. Substrate is bound at residue Lys-126. Phosphoserine is present on Ser-168. Asn-171–Phe-175 contacts substrate. Asn-234 and Asn-264 together coordinate FMN. Position 264-269 (Asn-264–Asn-269) interacts with substrate. Catalysis depends on Ser-267, which acts as the Nucleophile. Lys-306 is a binding site for FMN. Asn-335–Thr-336 is a substrate binding site. Residues Gly-358, Gly-387, and Tyr-408–Thr-409 each bind FMN.

This sequence belongs to the dihydroorotate dehydrogenase family. Type 2 subfamily. It depends on FMN as a cofactor.

The protein localises to the mitochondrion inner membrane. It carries out the reaction (S)-dihydroorotate + a quinone = orotate + a quinol. The protein operates within pyrimidine metabolism; UMP biosynthesis via de novo pathway; orotate from (S)-dihydroorotate (quinone route): step 1/1. In terms of biological role, in the de novo pyrimidine biosynthesis pathway, catalyzes the stereospecific oxidation of (S)-dihydroorotate to orotate with reduction of flavin and the transfer of electrons to ubiquinone, which is part of the respiratory chain. Does not use fumarate and NAD as electron acceptors. This is Dihydroorotate dehydrogenase (quinone), mitochondrial (ura3) from Schizosaccharomyces pombe (strain 972 / ATCC 24843) (Fission yeast).